Reading from the N-terminus, the 103-residue chain is Large ribosomal subunit protein bL21 (103 aa).

Belongs to the bacterial ribosomal protein bL21 family. In terms of assembly, part of the 50S ribosomal subunit. Contacts protein L20.

Its function is as follows. This protein binds to 23S rRNA in the presence of protein L20. The protein is Large ribosomal subunit protein bL21 of Shewanella sp. (strain MR-7).